The chain runs to 1534 residues: Dicer-like protein 2 (1534 aa).

Basic and acidic residues predominate over residues 1–10; sequence MDQDPRKDNP. The disordered stretch occupies residues 1–36; it reads MDQDPRKDNPVEMDVDRDDSSQDPDDNESFKSALDE. Acidic residues predominate over residues 11-27; sequence VEMDVDRDDSSQDPDDN. A Helicase ATP-binding domain is found at 65–249; that stretch reads TPAALTARAY…IEKLEQVLDA (185 aa). Residue 78–85 coordinates ATP; that stretch reads MFEASLKQ. The DEAH box motif lies at 192–195; the sequence is DEAH. The Helicase C-terminal domain maps to 404–575; that stretch reads KVQTLLKVLA…NAELELLDDP (172 aa). The region spanning 597 to 700 is the Dicer dsRNA-binding fold domain; it reads ARSHLNHFCA…LPTKVSDFLA (104 aa). RNase III domains lie at 959-1107 and 1153-1353; these read MSLV…MCGG and LEPL…VDSG. Mg(2+)-binding residues include E1193, D1339, and E1342. The region spanning 1383–1483 is the DRBM domain; that stretch reads HPNVELQILA…AEKGCLVIKA (101 aa). A compositionally biased stretch (basic and acidic residues) spans 1492 to 1504; the sequence is KAAAKEDKGHNTE. A disordered region spans residues 1492 to 1534; it reads KAAAKEDKGHNTENGDANADNGQSGEKEEVPDCRDADGDTVMN. The span at 1505-1515 shows a compositional bias: polar residues; it reads NGDANADNGQS. Residues 1516-1528 are compositionally biased toward basic and acidic residues; that stretch reads GEKEEVPDCRDAD.

Belongs to the helicase family. Dicer subfamily. The cofactor is Mg(2+). Requires Mn(2+) as cofactor.

Its function is as follows. Dicer-like endonuclease involved in cleaving double-stranded RNA in the RNA interference (RNAi) pathway. Produces 21 to 25 bp dsRNAs (siRNAs) which target the selective destruction of homologous RNAs leading to sequence-specific suppression of gene expression, called post-transcriptional gene silencing (PTGS). Part of a broad host defense response against viral infection and transposons. Controls the expression of the non-LTR retrotransposon Tad in the African strain, Adiomopoume. The chain is Dicer-like protein 2 (dcl-2) from Neurospora crassa (strain ATCC 24698 / 74-OR23-1A / CBS 708.71 / DSM 1257 / FGSC 987).